Here is an 83-residue protein sequence, read N- to C-terminus: U3-theraphotoxin-Cg1a (83 aa).

An N-terminal signal peptide occupies residues 1 to 23 (MRTFTLIAILTCAVLVIFHAAAA). Positions 24–44 (EELEAQDVIETEALATLDEER) are excised as a propeptide. Cystine bridges form between cysteine 48–cysteine 61, cysteine 52–cysteine 75, and cysteine 69–cysteine 80.

It belongs to the neurotoxin 12 (Hwtx-2) family. 03 (juruin) subfamily. Post-translationally, contains 3 disulfide bonds. Two different connectivities are observed in similar proteins (C1-C3, C2-C5, C4-C6 or C1-C4, C2-C5, C3-C6). In terms of tissue distribution, expressed by the venom gland.

It is found in the secreted. In terms of biological role, probable ion channel inhibitor. This chain is U3-theraphotoxin-Cg1a, found in Chilobrachys guangxiensis (Chinese earth tiger tarantula).